Reading from the N-terminus, the 54-residue chain is Large ribosomal subunit protein uL15 (54 aa).

Positions 1–30 are enriched in basic residues; it reads MPSRLRXTRKLRGHVSHGHGRIGKHRKHPG. The tract at residues 1–42 is disordered; it reads MPSRLRXTRKLRGHVSHGHGRIGKHRKHPGGRGNAGGMHHHR. His39 is subject to (3S)-3-hydroxyhistidine. Lys47 bears the N6-acetyllysine mark.

The protein belongs to the universal ribosomal protein uL15 family. As to quaternary structure, component of the large ribosomal subunit. Post-translationally, hydroxylated on His-39 by MINA.

The protein localises to the cytoplasm. In terms of biological role, component of the large ribosomal subunit. The ribosome is a large ribonucleoprotein complex responsible for the synthesis of proteins in the cell. The protein is Large ribosomal subunit protein uL15 (RPL27A) of Sus scrofa (Pig).